The sequence spans 315 residues: tRNA dimethylallyltransferase (315 aa).

10-17 (GPTASGKS) lines the ATP pocket. Residue 12 to 17 (TASGKS) coordinates substrate. Positions 35–38 (DSMQ) are interaction with substrate tRNA.

This sequence belongs to the IPP transferase family. As to quaternary structure, monomer. The cofactor is Mg(2+).

It carries out the reaction adenosine(37) in tRNA + dimethylallyl diphosphate = N(6)-dimethylallyladenosine(37) in tRNA + diphosphate. Its function is as follows. Catalyzes the transfer of a dimethylallyl group onto the adenine at position 37 in tRNAs that read codons beginning with uridine, leading to the formation of N6-(dimethylallyl)adenosine (i(6)A). This chain is tRNA dimethylallyltransferase, found in Thermoanaerobacter pseudethanolicus (strain ATCC 33223 / 39E) (Clostridium thermohydrosulfuricum).